A 569-amino-acid polypeptide reads, in one-letter code: 2-isopropylmalate synthase (569 aa).

The Pyruvate carboxyltransferase domain occupies 31-305; the sequence is PRWMSTDLRD…APELDFSDID (275 aa). Residues Asp40, His244, His246, and Asn280 each contribute to the Mg(2+) site. Residues 437–569 are regulatory domain; the sequence is RETPLRYVSH…TASASAATEA (133 aa).

The protein belongs to the alpha-IPM synthase/homocitrate synthase family. LeuA type 2 subfamily. In terms of assembly, homodimer. The cofactor is Mg(2+).

It is found in the cytoplasm. The enzyme catalyses 3-methyl-2-oxobutanoate + acetyl-CoA + H2O = (2S)-2-isopropylmalate + CoA + H(+). The protein operates within amino-acid biosynthesis; L-leucine biosynthesis; L-leucine from 3-methyl-2-oxobutanoate: step 1/4. Functionally, catalyzes the condensation of the acetyl group of acetyl-CoA with 3-methyl-2-oxobutanoate (2-ketoisovalerate) to form 3-carboxy-3-hydroxy-4-methylpentanoate (2-isopropylmalate). The sequence is that of 2-isopropylmalate synthase from Cupriavidus taiwanensis (strain DSM 17343 / BCRC 17206 / CCUG 44338 / CIP 107171 / LMG 19424 / R1) (Ralstonia taiwanensis (strain LMG 19424)).